A 245-amino-acid polypeptide reads, in one-letter code: tRNA pseudouridine synthase A (245 aa).

Residue aspartate 52 is the Nucleophile of the active site. A substrate-binding site is contributed by tyrosine 111.

It belongs to the tRNA pseudouridine synthase TruA family. Homodimer.

It carries out the reaction uridine(38/39/40) in tRNA = pseudouridine(38/39/40) in tRNA. Functionally, formation of pseudouridine at positions 38, 39 and 40 in the anticodon stem and loop of transfer RNAs. The protein is tRNA pseudouridine synthase A of Rickettsia canadensis (strain McKiel).